The chain runs to 443 residues: Ribosomal protein uS12 methylthiotransferase RimO (443 aa).

Residues 10-120 (PRVGFVSLGC…VVKAVHQHLP (111 aa)) enclose the MTTase N-terminal domain. The [4Fe-4S] cluster site is built by C19, C55, C84, C151, C155, and C158. A Radical SAM core domain is found at 137–375 (LTPAHYAYLK…DFQEDISTQR (239 aa)). The region spanning 377–443 (ERWIGRDITV…VHDLYARPLP (67 aa)) is the TRAM domain.

The protein belongs to the methylthiotransferase family. RimO subfamily. [4Fe-4S] cluster is required as a cofactor.

It localises to the cytoplasm. It catalyses the reaction L-aspartate(89)-[ribosomal protein uS12]-hydrogen + (sulfur carrier)-SH + AH2 + 2 S-adenosyl-L-methionine = 3-methylsulfanyl-L-aspartate(89)-[ribosomal protein uS12]-hydrogen + (sulfur carrier)-H + 5'-deoxyadenosine + L-methionine + A + S-adenosyl-L-homocysteine + 2 H(+). Functionally, catalyzes the methylthiolation of an aspartic acid residue of ribosomal protein uS12. In Aromatoleum aromaticum (strain DSM 19018 / LMG 30748 / EbN1) (Azoarcus sp. (strain EbN1)), this protein is Ribosomal protein uS12 methylthiotransferase RimO.